A 211-amino-acid chain; its full sequence is DNA-directed RNA polymerases I, II, and III subunit RPABC1 (211 aa).

It belongs to the archaeal Rpo5/eukaryotic RPB5 RNA polymerase subunit family. In terms of assembly, component of the RNA polymerase I (Pol I), RNA polymerase II (Pol II) and RNA polymerase III (Pol III) complexes consisting of at least 13, 12 and 17 subunits, respectively. In RNA Pol II, this subunit is present in 2-fold molar excess over the other subunits.

Its subcellular location is the nucleus. DNA-dependent RNA polymerase catalyzes the transcription of DNA into RNA using the four ribonucleoside triphosphates as substrates. Common component of RNA polymerases I, II and III which synthesize ribosomal RNA precursors, mRNA precursors and many functional non-coding RNAs, and small RNAs, such as 5S rRNA and tRNAs, respectively. Pol II is the central component of the basal RNA polymerase II transcription machinery. Pols are composed of mobile elements that move relative to each other. In Pol II, RPB5 is part of the lower jaw surrounding the central large cleft and thought to grab the incoming DNA template. Seems to be the major component in this process. This is DNA-directed RNA polymerases I, II, and III subunit RPABC1 from Caenorhabditis briggsae.